Reading from the N-terminus, the 216-residue chain is Cytidylate kinase (216 aa).

7 to 15 (GPSGTGKST) is a binding site for ATP.

It belongs to the cytidylate kinase family. Type 1 subfamily.

The protein resides in the cytoplasm. The enzyme catalyses CMP + ATP = CDP + ADP. The catalysed reaction is dCMP + ATP = dCDP + ADP. This Chlamydia pneumoniae (Chlamydophila pneumoniae) protein is Cytidylate kinase.